The following is a 515-amino-acid chain: Protein FAM98A (515 aa).

Disordered regions lie at residues valine 297–glycine 411 and serine 432–serine 515. Positions valine 302–glutamate 311 are enriched in basic and acidic residues. Residues tryptophan 382–aspartate 395 are compositionally biased toward gly residues. The segment covering arginine 444 to serine 456 has biased composition (basic and acidic residues). Over residues glycine 457–glycine 481 the composition is skewed to gly residues. A compositionally biased stretch (low complexity) spans tyrosine 485–glutamine 501. Residues tyrosine 502–serine 515 show a composition bias toward polar residues.

The protein belongs to the FAM98 family. Interacts (via N- and C-terminus) with DDX1. Interacts (via N- and C-terminus) with C14orf166. Interacts with FAM98B. Interacts with PLEKHM1 (via N- and C-terminus).

Functionally, positively stimulates PRMT1-induced protein arginine methylation. Involved in skeletal homeostasis. Positively regulates lysosome peripheral distribution and ruffled border formation in osteoclasts. The chain is Protein FAM98A from Rattus norvegicus (Rat).